A 420-amino-acid chain; its full sequence is Gamma-glutamyl phosphate reductase (420 aa).

Belongs to the gamma-glutamyl phosphate reductase family.

It localises to the cytoplasm. The catalysed reaction is L-glutamate 5-semialdehyde + phosphate + NADP(+) = L-glutamyl 5-phosphate + NADPH + H(+). The protein operates within amino-acid biosynthesis; L-proline biosynthesis; L-glutamate 5-semialdehyde from L-glutamate: step 2/2. In terms of biological role, catalyzes the NADPH-dependent reduction of L-glutamate 5-phosphate into L-glutamate 5-semialdehyde and phosphate. The product spontaneously undergoes cyclization to form 1-pyrroline-5-carboxylate. This is Gamma-glutamyl phosphate reductase from Chlorobium luteolum (strain DSM 273 / BCRC 81028 / 2530) (Pelodictyon luteolum).